Reading from the N-terminus, the 30-residue chain is V-type proton ATPase catalytic subunit A isoform 1 (30 aa).

The protein belongs to the ATPase alpha/beta chains family. As to quaternary structure, V-ATPase is a heteromultimeric enzyme composed of a peripheral catalytic V1 complex (main components: subunits A, B, C, D, E, and F) attached to an integral membrane V0 proton pore complex (main component: the proteolipid protein).

The enzyme catalyses ATP + H2O + 4 H(+)(in) = ADP + phosphate + 5 H(+)(out). Functionally, catalytic subunit of the peripheral V1 complex of vacuolar ATPase. V-ATPase vacuolar ATPase is responsible for acidifying a variety of intracellular compartments in eukaryotic cells. The protein is V-type proton ATPase catalytic subunit A isoform 1 of Psilotum nudum (Whisk fern).